Here is a 276-residue protein sequence, read N- to C-terminus: MHHPAEHSPLGKTSEYVSRYTPSLLFPIARAAKWAELGLSAATLPYRGVDIWNCYELSWLTPAGKPVVAIGEFSIPADSPNIIESKSFKLYLNSLNQSSFDSRDALRAVLEQDLSVAAGAAVGVRLRSLDEVAEEGVGRLPGRCIDELEIAVDGYERPRPELLRCDAGRFVEEQLYSHLLKSNCPVTGQPDWGTLVVDYRGPALDPASLLAYLVSFRQHQDFHEQCVERIFLDLRRLLQPQALTVYARYVRRGGLDINPYRSLVDVAPDNRRLVRQ.

Position 83–85 (83–85 (IES)) interacts with substrate. NADPH is bound at residue 85–86 (SK). C184 (thioimide intermediate) is an active-site residue. D191 acts as the Proton donor in catalysis. 223–224 (HE) contacts substrate. 252 to 253 (RG) contributes to the NADPH binding site.

The protein belongs to the GTP cyclohydrolase I family. QueF type 2 subfamily. In terms of assembly, homodimer.

Its subcellular location is the cytoplasm. The enzyme catalyses 7-aminomethyl-7-carbaguanine + 2 NADP(+) = 7-cyano-7-deazaguanine + 2 NADPH + 3 H(+). It participates in tRNA modification; tRNA-queuosine biosynthesis. Its function is as follows. Catalyzes the NADPH-dependent reduction of 7-cyano-7-deazaguanine (preQ0) to 7-aminomethyl-7-deazaguanine (preQ1). This is NADPH-dependent 7-cyano-7-deazaguanine reductase from Pseudomonas paraeruginosa (strain DSM 24068 / PA7) (Pseudomonas aeruginosa (strain PA7)).